The primary structure comprises 387 residues: MYVVNPEEKVIEIMKQTGIDLAATLPCDRIKNLLPLVSENFPEIKLTREENGVGICAGIYLAGGKPMMLIQSTGLGNMINALESLNVTCKIPLPILASWRGVYKEGIEAQVPLGAHLPSILEGAGLTYTIIGETEKLPLLENVILDAFENSRPHIALVSPKVWEASECCAWQAAGMPIKPEIMERTCRFSLTSGTLKPFMLRNDAICTLASELDDEITVTNLGVPCKELYACRDRELNFYMFGSMGLVSSIGLGLALRSEKTVITFDGDGSLLMNPNALLEIAKEAPKNLIIIALDNGAYGSTGSQETCALRYIDLEIFANACGIQNTAKVNSKEGVIEAFRKFKAMRELSFIHVILKPGNTNAPNIPMSPEEATKRFKETLDVKKF.

Belongs to the TPP enzyme family. Thiamine diphosphate serves as cofactor.

It catalyses the reaction 3-sulfopyruvate + H(+) = sulfoacetaldehyde + CO2. It functions in the pathway cofactor biosynthesis; coenzyme M biosynthesis. Its function is as follows. Involved in the biosynthesis of the coenzyme M (2-mercaptoethanesulfonic acid). Catalyzes the decarboxylation of sulfopyruvate to sulfoacetaldehyde. Is not able to decarboxylate the analogous compounds 2-oxoglutarate or 2-oxosuberate. The protein is Sulfopyruvate decarboxylase of Methanosarcina acetivorans (strain ATCC 35395 / DSM 2834 / JCM 12185 / C2A).